A 383-amino-acid polypeptide reads, in one-letter code: Acetylornithine deacetylase (383 aa).

Zn(2+) is bound at residue His-80. Residue Asp-82 is part of the active site. Position 112 (Asp-112) interacts with Zn(2+). The active site involves Glu-144. 3 residues coordinate Zn(2+): Glu-145, Glu-169, and His-355.

Belongs to the peptidase M20A family. ArgE subfamily. In terms of assembly, homodimer. It depends on Zn(2+) as a cofactor. Co(2+) serves as cofactor. Requires glutathione as cofactor.

Its subcellular location is the cytoplasm. The enzyme catalyses N(2)-acetyl-L-ornithine + H2O = L-ornithine + acetate. It participates in amino-acid biosynthesis; L-arginine biosynthesis; L-ornithine from N(2)-acetyl-L-ornithine (linear): step 1/1. Its function is as follows. Catalyzes the hydrolysis of the amide bond of N(2)-acetylated L-amino acids. Cleaves the acetyl group from N-acetyl-L-ornithine to form L-ornithine, an intermediate in L-arginine biosynthesis pathway, and a branchpoint in the synthesis of polyamines. The sequence is that of Acetylornithine deacetylase from Shigella boydii serotype 18 (strain CDC 3083-94 / BS512).